The primary structure comprises 341 residues: Methionine import ATP-binding protein MetN 1 (341 aa).

The 240-residue stretch at 2–241 (IEFRQVSKSF…PKTTIAQNFV (240 aa)) folds into the ABC transporter domain. 38 to 45 (GYSGAGKS) lines the ATP pocket.

This sequence belongs to the ABC transporter superfamily. Methionine importer (TC 3.A.1.24) family. In terms of assembly, the complex is composed of two ATP-binding proteins (MetN), two transmembrane proteins (MetI) and a solute-binding protein (MetQ).

The protein resides in the cell membrane. It catalyses the reaction L-methionine(out) + ATP + H2O = L-methionine(in) + ADP + phosphate + H(+). It carries out the reaction D-methionine(out) + ATP + H2O = D-methionine(in) + ADP + phosphate + H(+). Its function is as follows. Part of the ABC transporter complex MetNIQ involved in methionine import. Responsible for energy coupling to the transport system. In Staphylococcus aureus (strain Mu50 / ATCC 700699), this protein is Methionine import ATP-binding protein MetN 1.